A 141-amino-acid polypeptide reads, in one-letter code: ATP synthase epsilon chain (141 aa).

This sequence belongs to the ATPase epsilon chain family. F-type ATPases have 2 components, CF(1) - the catalytic core - and CF(0) - the membrane proton channel. CF(1) has five subunits: alpha(3), beta(3), gamma(1), delta(1), epsilon(1). CF(0) has three main subunits: a, b and c.

The protein localises to the cell inner membrane. Produces ATP from ADP in the presence of a proton gradient across the membrane. The chain is ATP synthase epsilon chain from Azoarcus sp. (strain BH72).